The chain runs to 399 residues: 4-hydroxy-3-methylbut-2-enyl diphosphate reductase (399 aa).

Residue cysteine 66 coordinates [4Fe-4S] cluster. Histidine 96 is a binding site for (2E)-4-hydroxy-3-methylbut-2-enyl diphosphate. Residue histidine 96 coordinates dimethylallyl diphosphate. Histidine 96 serves as a coordination point for isopentenyl diphosphate. Residue cysteine 157 participates in [4Fe-4S] cluster binding. Histidine 185 serves as a coordination point for (2E)-4-hydroxy-3-methylbut-2-enyl diphosphate. Histidine 185 contributes to the dimethylallyl diphosphate binding site. Histidine 185 is an isopentenyl diphosphate binding site. Glutamate 187 serves as the catalytic Proton donor. Threonine 250 provides a ligand contact to (2E)-4-hydroxy-3-methylbut-2-enyl diphosphate. Residue cysteine 288 participates in [4Fe-4S] cluster binding. Serine 317, serine 318, asparagine 319, and serine 380 together coordinate (2E)-4-hydroxy-3-methylbut-2-enyl diphosphate. Positions 317, 318, 319, and 380 each coordinate dimethylallyl diphosphate. Residues serine 317, serine 318, asparagine 319, and serine 380 each contribute to the isopentenyl diphosphate site.

Belongs to the IspH family. [4Fe-4S] cluster serves as cofactor.

The enzyme catalyses isopentenyl diphosphate + 2 oxidized [2Fe-2S]-[ferredoxin] + H2O = (2E)-4-hydroxy-3-methylbut-2-enyl diphosphate + 2 reduced [2Fe-2S]-[ferredoxin] + 2 H(+). It carries out the reaction dimethylallyl diphosphate + 2 oxidized [2Fe-2S]-[ferredoxin] + H2O = (2E)-4-hydroxy-3-methylbut-2-enyl diphosphate + 2 reduced [2Fe-2S]-[ferredoxin] + 2 H(+). It functions in the pathway isoprenoid biosynthesis; dimethylallyl diphosphate biosynthesis; dimethylallyl diphosphate from (2E)-4-hydroxy-3-methylbutenyl diphosphate: step 1/1. It participates in isoprenoid biosynthesis; isopentenyl diphosphate biosynthesis via DXP pathway; isopentenyl diphosphate from 1-deoxy-D-xylulose 5-phosphate: step 6/6. In terms of biological role, catalyzes the conversion of 1-hydroxy-2-methyl-2-(E)-butenyl 4-diphosphate (HMBPP) into a mixture of isopentenyl diphosphate (IPP) and dimethylallyl diphosphate (DMAPP). Acts in the terminal step of the DOXP/MEP pathway for isoprenoid precursor biosynthesis. The chain is 4-hydroxy-3-methylbut-2-enyl diphosphate reductase from Parasynechococcus marenigrum (strain WH8102).